The primary structure comprises 172 residues: Cyclin-L1 (172 aa).

The interval 1–36 is disordered; that stretch reads MASGPHSTATAAAAASSAAPSAGGSSSGTTTTTTTT. A cyclin-like region spans residues 88–168; the sequence is ELIQAAGILL…LRGKSDQLHL (81 aa).

Belongs to the cyclin family. Cyclin L subfamily. In terms of assembly, interacts with POLR2A via its hyperphosphorylated C-terminal domain (CTD). Interacts with CDK11A, CDK11B, CDK12 and CDK13. May form a ternary complex with CDK11B and casein kinase II (CKII). Interacts with pre-mRNA-splicing factors, including at least SRSF1, SRSF2 and SRSF7/SLU7.

The protein resides in the nucleus speckle. It localises to the nucleus. The protein localises to the nucleoplasm. Functionally, involved in pre-mRNA splicing. Functions in association with cyclin-dependent kinases (CDKs). May play a role in the regulation of RNA polymerase II (pol II). Inhibited by the CDK-specific inhibitor CDKN1A/p21. This is Cyclin-L1 (CCNL1) from Pongo abelii (Sumatran orangutan).